Here is a 92-residue protein sequence, read N- to C-terminus: Small ribosomal subunit protein uS19 (92 aa).

This sequence belongs to the universal ribosomal protein uS19 family.

In terms of biological role, protein S19 forms a complex with S13 that binds strongly to the 16S ribosomal RNA. This chain is Small ribosomal subunit protein uS19, found in Rickettsia canadensis (strain McKiel).